A 254-amino-acid polypeptide reads, in one-letter code: MNRRRRIYEGKAKILYEGPEPGTLVQFFKDDATAFNAKKHEVIDGKGVLNNRISEHIFTQLNRIGIPTHFIRRLNMREQLIKEVEIIPLEVVVRNVAAGSLAKRLGLEEGTILPRSIIEFYYKADALDDPMVTEEHITAFGWASPQEIDDIMALAIRVNDFLTGLFLGIGIQLVDFKMECGRLWEGDMMRIVVADEISPDSARLWDITTNDKLDKDRFRRDMGGLVEAYQEVARRLGIMNENDTPRPSGPTLVK.

The protein belongs to the SAICAR synthetase family.

It catalyses the reaction 5-amino-1-(5-phospho-D-ribosyl)imidazole-4-carboxylate + L-aspartate + ATP = (2S)-2-[5-amino-1-(5-phospho-beta-D-ribosyl)imidazole-4-carboxamido]succinate + ADP + phosphate + 2 H(+). It functions in the pathway purine metabolism; IMP biosynthesis via de novo pathway; 5-amino-1-(5-phospho-D-ribosyl)imidazole-4-carboxamide from 5-amino-1-(5-phospho-D-ribosyl)imidazole-4-carboxylate: step 1/2. The sequence is that of Phosphoribosylaminoimidazole-succinocarboxamide synthase from Brucella canis (strain ATCC 23365 / NCTC 10854 / RM-666).